Here is a 430-residue protein sequence, read N- to C-terminus: 3-phosphoshikimate 1-carboxyvinyltransferase (430 aa).

K20, S21, and R25 together coordinate 3-phosphoshikimate. A phosphoenolpyruvate-binding site is contributed by K20. Phosphoenolpyruvate-binding residues include G92 and R120. S166, Q168, D312, and K339 together coordinate 3-phosphoshikimate. Q168 contacts phosphoenolpyruvate. Residue D312 is the Proton acceptor of the active site. Phosphoenolpyruvate-binding residues include R343 and R387.

It belongs to the EPSP synthase family. As to quaternary structure, monomer.

It is found in the cytoplasm. It carries out the reaction 3-phosphoshikimate + phosphoenolpyruvate = 5-O-(1-carboxyvinyl)-3-phosphoshikimate + phosphate. The protein operates within metabolic intermediate biosynthesis; chorismate biosynthesis; chorismate from D-erythrose 4-phosphate and phosphoenolpyruvate: step 6/7. Catalyzes the transfer of the enolpyruvyl moiety of phosphoenolpyruvate (PEP) to the 5-hydroxyl of shikimate-3-phosphate (S3P) to produce enolpyruvyl shikimate-3-phosphate and inorganic phosphate. In Lactococcus lactis subsp. lactis (strain IL1403) (Streptococcus lactis), this protein is 3-phosphoshikimate 1-carboxyvinyltransferase.